Here is a 47-residue protein sequence, read N- to C-terminus: Delta-actitoxin-Ael1a (47 aa).

3 cysteine pairs are disulfide-bonded: C4–C44, C6–C34, and C27–C45.

This sequence belongs to the sea anemone sodium channel inhibitory toxin family. Type I subfamily. Expressed in ectodermal glands. Not expressed in nematocytes.

It is found in the secreted. Its function is as follows. Binds specifically to voltage-gated sodium channels (Nav), thereby delaying their inactivation during signal transduction. It strongly stimulates mammalian cardiac muscle contraction. Paralyzes the shore crab (C.maenas) by tetanic contractions after intramuscular injection. The protein is Delta-actitoxin-Ael1a of Anthopleura elegantissima (Green aggregating anemone).